We begin with the raw amino-acid sequence, 858 residues long: Bifunctional uridylyltransferase/uridylyl-removing enzyme (858 aa).

The interval 1 to 318 (MNPTDLHPIK…FPRPESDARA (318 aa)) is uridylyltransferase. Positions 319–674 (IDEEFRSLHG…VRPTEEGSGL (356 aa)) are uridylyl-removing. One can recognise an HD domain in the interval 437–559 (VDQHTLAVIR…VKDERHLNAL (123 aa)). ACT domains lie at 675-756 (QIMV…LADV) and 789-858 (RLSV…LAGE).

The protein belongs to the GlnD family. The cofactor is Mg(2+).

It carries out the reaction [protein-PII]-L-tyrosine + UTP = [protein-PII]-uridylyl-L-tyrosine + diphosphate. The enzyme catalyses [protein-PII]-uridylyl-L-tyrosine + H2O = [protein-PII]-L-tyrosine + UMP + H(+). Uridylyltransferase (UTase) activity is inhibited by glutamine, while glutamine activates uridylyl-removing (UR) activity. In terms of biological role, modifies, by uridylylation and deuridylylation, the PII regulatory proteins (GlnB and homologs), in response to the nitrogen status of the cell that GlnD senses through the glutamine level. Under low glutamine levels, catalyzes the conversion of the PII proteins and UTP to PII-UMP and PPi, while under higher glutamine levels, GlnD hydrolyzes PII-UMP to PII and UMP (deuridylylation). Thus, controls uridylylation state and activity of the PII proteins, and plays an important role in the regulation of nitrogen assimilation and metabolism. This Bordetella avium (strain 197N) protein is Bifunctional uridylyltransferase/uridylyl-removing enzyme.